The primary structure comprises 47 residues: Conotoxin Bu10 (47 aa).

A propeptide spanning residues 1–22 (DSRGTQLHRALRKATILSVSAR) is cleaved from the precursor. Cystine bridges form between Cys-23–Cys-37, Cys-30–Cys-41, and Cys-36–Cys-46. Residue Cys-46 is modified to Cysteine amide.

It belongs to the conotoxin O1 superfamily. In terms of tissue distribution, expressed by the venom duct.

The protein resides in the secreted. The polypeptide is Conotoxin Bu10 (Conus bullatus (Bubble cone)).